The primary structure comprises 161 residues: Ribonuclease P protein component (161 aa).

The protein belongs to the RnpA family. As to quaternary structure, consists of a catalytic RNA component (M1 or rnpB) and a protein subunit.

It carries out the reaction Endonucleolytic cleavage of RNA, removing 5'-extranucleotides from tRNA precursor.. Its function is as follows. RNaseP catalyzes the removal of the 5'-leader sequence from pre-tRNA to produce the mature 5'-terminus. It can also cleave other RNA substrates such as 4.5S RNA. The protein component plays an auxiliary but essential role in vivo by binding to the 5'-leader sequence and broadening the substrate specificity of the ribozyme. The sequence is that of Ribonuclease P protein component from Helicobacter pylori (strain Shi470).